The primary structure comprises 272 residues: NAD kinase (272 aa).

The active-site Proton acceptor is Asp-62. Residues 62-63 (DG), Arg-67, 129-130 (NE), Arg-140, Lys-157, Asp-159, Ile-167, 170-175 (SSYSSS), Ala-194, and Gln-229 each bind NAD(+).

The protein belongs to the NAD kinase family. The cofactor is a divalent metal cation.

The protein localises to the cytoplasm. The enzyme catalyses NAD(+) + ATP = ADP + NADP(+) + H(+). In terms of biological role, involved in the regulation of the intracellular balance of NAD and NADP, and is a key enzyme in the biosynthesis of NADP. Catalyzes specifically the phosphorylation on 2'-hydroxyl of the adenosine moiety of NAD to yield NADP. This is NAD kinase from Thermoplasma acidophilum (strain ATCC 25905 / DSM 1728 / JCM 9062 / NBRC 15155 / AMRC-C165).